The chain runs to 264 residues: NAD kinase 1 (264 aa).

Aspartate 45 (proton acceptor) is an active-site residue. NAD(+) contacts are provided by residues 45-46 (DG), 122-123 (NE), arginine 148, aspartate 150, 161-166 (TAYNKS), and alanine 185.

The protein belongs to the NAD kinase family. A divalent metal cation is required as a cofactor.

The protein localises to the cytoplasm. The enzyme catalyses NAD(+) + ATP = ADP + NADP(+) + H(+). Functionally, involved in the regulation of the intracellular balance of NAD and NADP, and is a key enzyme in the biosynthesis of NADP. Catalyzes specifically the phosphorylation on 2'-hydroxyl of the adenosine moiety of NAD to yield NADP. This chain is NAD kinase 1, found in Listeria monocytogenes serotype 4b (strain F2365).